The following is a 137-amino-acid chain: Probable 4-amino-4-deoxy-L-arabinose-phosphoundecaprenol flippase subunit ArnF (137 aa).

Over 1-5 (MSRAR) the chain is Cytoplasmic. A helical transmembrane segment spans residues 6–26 (GFAFALGSVALVSGAQLGMRW). The Periplasmic segment spans residues 27-49 (SMTRLPAPDQWLPALSAGSVDLA). A helical membrane pass occupies residues 50–70 (ALAVVAAAIAAYALSMLCWLL). Residues 71 to 80 (ALRDLPLGRA) are Cytoplasmic-facing. Residues 81–101 (YSLLSISYALVYLLAASLPLF) traverse the membrane as a helical segment. Residue asparagine 102 is a topological domain, periplasmic. The chain crosses the membrane as a helical span at residues 103 to 123 (EPFTLSKTLGVALVILGVITI). Residues 124 to 137 (NSRSAPATSPRNTP) are Cytoplasmic-facing.

It belongs to the ArnF family. Heterodimer of ArnE and ArnF.

The protein resides in the cell inner membrane. Its pathway is bacterial outer membrane biogenesis; lipopolysaccharide biosynthesis. Translocates 4-amino-4-deoxy-L-arabinose-phosphoundecaprenol (alpha-L-Ara4N-phosphoundecaprenol) from the cytoplasmic to the periplasmic side of the inner membrane. The protein is Probable 4-amino-4-deoxy-L-arabinose-phosphoundecaprenol flippase subunit ArnF of Pseudomonas fluorescens (strain ATCC BAA-477 / NRRL B-23932 / Pf-5).